A 292-amino-acid polypeptide reads, in one-letter code: Ribosomal protein L11 methyltransferase (292 aa).

S-adenosyl-L-methionine contacts are provided by T143, G164, D186, and N227.

This sequence belongs to the methyltransferase superfamily. PrmA family.

The protein resides in the cytoplasm. The catalysed reaction is L-lysyl-[protein] + 3 S-adenosyl-L-methionine = N(6),N(6),N(6)-trimethyl-L-lysyl-[protein] + 3 S-adenosyl-L-homocysteine + 3 H(+). In terms of biological role, methylates ribosomal protein L11. In Hahella chejuensis (strain KCTC 2396), this protein is Ribosomal protein L11 methyltransferase.